The primary structure comprises 461 residues: Cysteine--tRNA ligase (461 aa).

C28 lines the Zn(2+) pocket. A 'HIGH' region motif is present at residues 30-40 (ITVYDLCHIGH). Positions 209, 234, and 238 each coordinate Zn(2+). The 'KMSKS' region motif lies at 266-270 (KMSKS). Residue K269 participates in ATP binding.

Belongs to the class-I aminoacyl-tRNA synthetase family. Monomer. Requires Zn(2+) as cofactor.

The protein localises to the cytoplasm. It carries out the reaction tRNA(Cys) + L-cysteine + ATP = L-cysteinyl-tRNA(Cys) + AMP + diphosphate. In Pectobacterium carotovorum subsp. carotovorum (strain PC1), this protein is Cysteine--tRNA ligase.